Reading from the N-terminus, the 206-residue chain is Ribosomal RNA small subunit methyltransferase G (206 aa).

S-adenosyl-L-methionine contacts are provided by residues Gly-71, Phe-76, 122–123 (AE), and Arg-135.

This sequence belongs to the methyltransferase superfamily. RNA methyltransferase RsmG family.

The protein resides in the cytoplasm. Its function is as follows. Specifically methylates the N7 position of a guanine in 16S rRNA. This Bacteroides fragilis (strain ATCC 25285 / DSM 2151 / CCUG 4856 / JCM 11019 / LMG 10263 / NCTC 9343 / Onslow / VPI 2553 / EN-2) protein is Ribosomal RNA small subunit methyltransferase G.